A 340-amino-acid polypeptide reads, in one-letter code: Trimethylamine N-oxide transport system ATP-binding protein TmoW (340 aa).

Positions Gly32–Thr268 constitute an ABC transporter domain. Residue Gly64–Ser71 participates in ATP binding.

Belongs to the ABC transporter superfamily. The complex is probably composed of two ATP-binding proteins (TmoW), two transmembrane proteins (TmoV) and a solute-binding protein (TmoX).

It is found in the cell inner membrane. It carries out the reaction a quaternary ammonium(out) + ATP + H2O = a quaternary ammonium(in) + ADP + phosphate + H(+). Part of the ABC transporter complex TmoXWV involved in trimethylamine N-oxide (TMAO) import. Responsible for energy coupling to the transport system. Is specific for TMAO and essential for TMAO metabolism. The polypeptide is Trimethylamine N-oxide transport system ATP-binding protein TmoW (Ruegeria pomeroyi (strain ATCC 700808 / DSM 15171 / DSS-3) (Silicibacter pomeroyi)).